The sequence spans 197 residues: Phosphoheptose isomerase (197 aa).

The region spanning 36 to 197 (MVNALLNEGK…IDRQLFGSEE (162 aa)) is the SIS domain. 51-53 (NGG) is a substrate binding site. The Zn(2+) site is built by histidine 60 and glutamate 64. Residues glutamate 64, 93 to 94 (ND), 119 to 121 (STS), serine 124, and glutamine 174 contribute to the substrate site. Zn(2+)-binding residues include glutamine 174 and histidine 182.

This sequence belongs to the SIS family. GmhA subfamily. In terms of assembly, homotetramer. Zn(2+) is required as a cofactor.

The protein resides in the cytoplasm. The enzyme catalyses 2 D-sedoheptulose 7-phosphate = D-glycero-alpha-D-manno-heptose 7-phosphate + D-glycero-beta-D-manno-heptose 7-phosphate. It participates in carbohydrate biosynthesis; D-glycero-D-manno-heptose 7-phosphate biosynthesis; D-glycero-alpha-D-manno-heptose 7-phosphate and D-glycero-beta-D-manno-heptose 7-phosphate from sedoheptulose 7-phosphate: step 1/1. Functionally, catalyzes the isomerization of sedoheptulose 7-phosphate in D-glycero-D-manno-heptose 7-phosphate. In Pseudomonas aeruginosa (strain LESB58), this protein is Phosphoheptose isomerase.